A 340-amino-acid chain; its full sequence is S-adenosylmethionine:tRNA ribosyltransferase-isomerase (340 aa).

This sequence belongs to the QueA family. Monomer.

It localises to the cytoplasm. The catalysed reaction is 7-aminomethyl-7-carbaguanosine(34) in tRNA + S-adenosyl-L-methionine = epoxyqueuosine(34) in tRNA + adenine + L-methionine + 2 H(+). The protein operates within tRNA modification; tRNA-queuosine biosynthesis. Its function is as follows. Transfers and isomerizes the ribose moiety from AdoMet to the 7-aminomethyl group of 7-deazaguanine (preQ1-tRNA) to give epoxyqueuosine (oQ-tRNA). This is S-adenosylmethionine:tRNA ribosyltransferase-isomerase from Nitratiruptor sp. (strain SB155-2).